The following is a 422-amino-acid chain: MSQLPRRDPRQEWIARNRLHPRHEEVLAALGQGATSEWPGPNGLMRKNPHRVGFIGPNGIKRIDRSGTQQGAGGGKASASVAGHKPLTEIAEPAFLVAVVPDMTGGRLSGHDKDLLGLARRLADADPAAQGAVLAVVFGSHKETNLGEAGVDRLLHLDSPEIAGYAPEARVGALITVEQAWTPRHWLLPDSKLGGGELGRRLAARLGERPATGIWQVEADAESATGWQCTARGAAGSLDIRRPLPRIALALAECAEPVSETRHTAAELVLPQPLPSTLSRIQDLGQVSVDPASVALSEAEFILAAGNGVRDWDAYHRAASVLGATEGASRVAVDEGYMPRDRQVGATGTWVTARVYIAVGISGAIQHLQGIQPCEKVIAINMDPSCDMIKRADLAVIGDSTQILEALVTLVSQAREEKRDAA.

Residues 61–80 form a disordered region; it reads KRIDRSGTQQGAGGGKASAS. FAD is bound by residues 329–330, 343–347, 360–367, and Asn381; these read SR, QVGAT, and GISGAIQH.

This sequence belongs to the ETF alpha-subunit/FixB family. Heterodimer of an alpha and a beta subunit. FAD serves as cofactor.

Its function is as follows. Participates in the electron transfer process during N,N-dimethylglycine (DMG) degradation to sarcosine. In Chromohalobacter salexigens (strain ATCC BAA-138 / DSM 3043 / CIP 106854 / NCIMB 13768 / 1H11), this protein is Electron transfer flavoprotein subunit alpha.